Reading from the N-terminus, the 299-residue chain is Diaminopimelate epimerase (299 aa).

Substrate contacts are provided by Asn-13, Gln-46, and Asn-66. The active-site Proton donor is Cys-75. Substrate-binding positions include 76 to 77 (GN), Asn-166, Asn-199, and 217 to 218 (ER). Cys-226 functions as the Proton acceptor in the catalytic mechanism. 227–228 (GT) is a binding site for substrate.

Belongs to the diaminopimelate epimerase family. Homodimer.

It localises to the cytoplasm. It carries out the reaction (2S,6S)-2,6-diaminopimelate = meso-2,6-diaminopimelate. The protein operates within amino-acid biosynthesis; L-lysine biosynthesis via DAP pathway; DL-2,6-diaminopimelate from LL-2,6-diaminopimelate: step 1/1. In terms of biological role, catalyzes the stereoinversion of LL-2,6-diaminopimelate (L,L-DAP) to meso-diaminopimelate (meso-DAP), a precursor of L-lysine and an essential component of the bacterial peptidoglycan. The sequence is that of Diaminopimelate epimerase from Paraburkholderia phytofirmans (strain DSM 17436 / LMG 22146 / PsJN) (Burkholderia phytofirmans).